The sequence spans 294 residues: Non-selective voltage-gated ion channel VDAC2 (294 aa).

An N-acetylalanine modification is found at alanine 2. ATP is bound by residues lysine 23 and lysine 31. Lysine 31 is subject to N6-acetyllysine; alternate. Lysine 31 bears the N6-succinyllysine; alternate mark. Lysine 31 participates in a covalent cross-link: Glycyl lysine isopeptide (Lys-Gly) (interchain with G-Cter in ubiquitin); alternate. The next 2 membrane-spanning stretches (beta stranded) occupy residues 37–46 and 50–58; these read LVKLDVKTKS and VEFSTSGSS. Residue lysine 64 forms a Glycyl lysine isopeptide (Lys-Gly) (interchain with G-Cter in ubiquitin) linkage. The beta stranded transmembrane segment at 65–75 threads the bilayer; that stretch reads VTGTLETKYKW. Tyrosine 78 bears the Phosphotyrosine mark. 3 beta stranded membrane passes run 80–87, 91–100, and 106–115; these read LTFTEKWN, TLGTEIAIED, and LKLTFDTTFS. Threonine 118 is modified (phosphothreonine). Lysine 120 carries the post-translational modification N6-acetyllysine; alternate. A Glycyl lysine isopeptide (Lys-Gly) (interchain with G-Cter in ubiquitin); alternate cross-link involves residue lysine 120. A Glycyl lysine isopeptide (Lys-Gly) (interchain with G-Cter in ubiquitin) cross-link involves residue lysine 121. The next 4 membrane-spanning stretches (beta stranded) occupy residues 122-131, 134-141, 148-156, and 161-169; these read SGKIKSSYKR, INLGCDVD, AIHGSAVFG, and LAGYQMTFD. Lysine 172 participates in a covalent cross-link: Glycyl lysine isopeptide (Lys-Gly) (interchain with G-Cter in ubiquitin). 6 beta stranded membrane-spanning segments follow: residues 174 to 186, 189 to 196, 200 to 209, 213 to 222, 229 to 238, and 242 to 249; these read KLTR…GYRT, FQLHTNVN, EFGGSIYQKV, LDTSVNLAWT, RFGIAAKYQL, and ASISAKVN. Serine 251 carries the post-translational modification Phosphoserine. NAD(+)-binding positions include 253-255 and 271-275; these read LIG and SALVD. Beta stranded transmembrane passes span 253–262 and 265–274; these read LIGVGYTQTL and GVKLTLSALV. Lysine 277 is modified (N6-acetyllysine; alternate). A Glycyl lysine isopeptide (Lys-Gly) (interchain with G-Cter in ubiquitin); alternate cross-link involves residue lysine 277. A beta stranded membrane pass occupies residues 284-293; the sequence is HKLGLALELE.

The protein belongs to the eukaryotic mitochondrial porin family. In terms of assembly, monomer, homodimer and higher order oligomers; formation of higher order structures is necessary for scramblase activity. Interacts with ARMC12 in a TBC1D21-dependent manner. Interacts with KLC3. Interacts with SPATA33. Interacts with PPP3CC in a SPATA33-dependent manner. In terms of processing, ubiquitinated by PRKN during mitophagy, leading to its degradation and enhancement of mitophagy. Deubiquitinated by USP30.

The protein resides in the mitochondrion outer membrane. The protein localises to the membrane. It catalyses the reaction chloride(in) = chloride(out). It carries out the reaction K(+)(in) = K(+)(out). The enzyme catalyses a 1,2-diacyl-sn-glycero-3-phospho-L-serine(in) = a 1,2-diacyl-sn-glycero-3-phospho-L-serine(out). The catalysed reaction is a 1,2-diacyl-sn-glycero-3-phosphocholine(in) = a 1,2-diacyl-sn-glycero-3-phosphocholine(out). It catalyses the reaction a 1,2-diacyl-sn-glycero-3-phospho-(1D-myo-inositol)(in) = a 1,2-diacyl-sn-glycero-3-phospho-(1D-myo-inositol)(out). Non-selective voltage-gated ion channel that mediates the transport of anions and cations through the mitochondrion outer membrane and plasma membrane. The channel adopts an open conformation at zero mV and a closed conformation at both positive and negative potentials. There are two populations of channels; the main that functions in a lower open-state conductance with lower ion selectivity, that switch, in a voltage-dependent manner, from the open to a low-conducting 'closed' state and the other that has a normal ion selectivity in the typical high conductance, 'open' state. Binds various lipids, including the sphingolipid ceramide, the phospholipid phosphatidylcholine, and the sterols cholesterol and oxysterol. Binding of ceramide promotes the mitochondrial outer membrane permeabilization (MOMP) apoptotic pathway. Its function is as follows. Catalyzes the scrambling of phospholipids across the outer mitochondrial membrane; the mechanism is unrelated to channel activity and is capable of translocating both anionic and zwitterionic phospholipids. This Oryctolagus cuniculus (Rabbit) protein is Non-selective voltage-gated ion channel VDAC2.